The sequence spans 69 residues: MANNKSSNNNELLVYGAEQAIDQMKYEIASEFGVNLGADTTARANGSVGGEITKRLVQLAEQQLGGGRF.

It belongs to the alpha/beta-type SASP family.

Its function is as follows. SASP are bound to spore DNA. They are double-stranded DNA-binding proteins that cause DNA to change to an a-like conformation. They protect the DNA backbone from chemical and enzymatic cleavage and are thus involved in dormant spore's high resistance to UV light. In Priestia megaterium (Bacillus megaterium), this protein is Small, acid-soluble spore protein C4 (SASP-C4).